We begin with the raw amino-acid sequence, 256 residues long: Ubiquinone/menaquinone biosynthesis C-methyltransferase UbiE (256 aa).

Residues Thr79, Asp100, and 128 to 129 each bind S-adenosyl-L-methionine; that span reads DA.

Belongs to the class I-like SAM-binding methyltransferase superfamily. MenG/UbiE family.

It catalyses the reaction a 2-demethylmenaquinol + S-adenosyl-L-methionine = a menaquinol + S-adenosyl-L-homocysteine + H(+). The catalysed reaction is a 2-methoxy-6-(all-trans-polyprenyl)benzene-1,4-diol + S-adenosyl-L-methionine = a 5-methoxy-2-methyl-3-(all-trans-polyprenyl)benzene-1,4-diol + S-adenosyl-L-homocysteine + H(+). The protein operates within quinol/quinone metabolism; menaquinone biosynthesis; menaquinol from 1,4-dihydroxy-2-naphthoate: step 2/2. It participates in cofactor biosynthesis; ubiquinone biosynthesis. Its function is as follows. Methyltransferase required for the conversion of demethylmenaquinol (DMKH2) to menaquinol (MKH2) and the conversion of 2-polyprenyl-6-methoxy-1,4-benzoquinol (DDMQH2) to 2-polyprenyl-3-methyl-6-methoxy-1,4-benzoquinol (DMQH2). The chain is Ubiquinone/menaquinone biosynthesis C-methyltransferase UbiE from Pseudomonas fluorescens (strain Pf0-1).